The primary structure comprises 179 residues: Nucleoside-triphosphatase THEP1 (179 aa).

Residues 7–14 and 98–105 each bind ATP; these read GMPGVGKT and IIIIDEIG.

This sequence belongs to the THEP1 NTPase family.

It carries out the reaction a ribonucleoside 5'-triphosphate + H2O = a ribonucleoside 5'-diphosphate + phosphate + H(+). Functionally, has nucleotide phosphatase activity towards ATP, GTP, CTP, TTP and UTP. May hydrolyze nucleoside diphosphates with lower efficiency. The sequence is that of Nucleoside-triphosphatase THEP1 from Pyrococcus abyssi (strain GE5 / Orsay).